The primary structure comprises 78 residues: Acyl carrier protein (78 aa).

In terms of domain architecture, Carrier spans 2–77 (SDIEQRVKQA…SAIDYVTKKL (76 aa)). The residue at position 37 (serine 37) is an O-(pantetheine 4'-phosphoryl)serine.

It belongs to the acyl carrier protein (ACP) family. 4'-phosphopantetheine is transferred from CoA to a specific serine of apo-ACP by AcpS. This modification is essential for activity because fatty acids are bound in thioester linkage to the sulfhydryl of the prosthetic group.

The protein localises to the cytoplasm. Its pathway is lipid metabolism; fatty acid biosynthesis. Carrier of the growing fatty acid chain in fatty acid biosynthesis. The protein is Acyl carrier protein of Acinetobacter baylyi (strain ATCC 33305 / BD413 / ADP1).